Reading from the N-terminus, the 339-residue chain is RNA 3'-terminal phosphate cyclase (339 aa).

Residues Q101 and 283–286 (HMSD) contribute to the ATP site. H307 functions as the Tele-AMP-histidine intermediate in the catalytic mechanism.

The protein belongs to the RNA 3'-terminal cyclase family. Type 1 subfamily.

The protein resides in the cytoplasm. It catalyses the reaction a 3'-end 3'-phospho-ribonucleotide-RNA + ATP = a 3'-end 2',3'-cyclophospho-ribonucleotide-RNA + AMP + diphosphate. Its function is as follows. Catalyzes the conversion of 3'-phosphate to a 2',3'-cyclic phosphodiester at the end of RNA. The mechanism of action of the enzyme occurs in 3 steps: (A) adenylation of the enzyme by ATP; (B) transfer of adenylate to an RNA-N3'P to produce RNA-N3'PP5'A; (C) and attack of the adjacent 2'-hydroxyl on the 3'-phosphorus in the diester linkage to produce the cyclic end product. The biological role of this enzyme is unknown but it is likely to function in some aspects of cellular RNA processing. This chain is RNA 3'-terminal phosphate cyclase, found in Sulfurisphaera tokodaii (strain DSM 16993 / JCM 10545 / NBRC 100140 / 7) (Sulfolobus tokodaii).